The sequence spans 242 residues: Outer membrane protein class 4 (242 aa).

The first 22 residues, 1–22 (MTKQLKLSALFVALLASGTAVA), serve as a signal peptide directing secretion. Repeat copies occupy residues 69 to 70 (AP), 71 to 72 (EP), 73 to 74 (EP), 75 to 76 (EP), 77 to 78 (EP), 79 to 80 (AP), and 81 to 82 (AP). Positions 69-82 (APEPEPEPEPAPAP) are 7 X 2 AA tandem repeats of X-P. The OmpA-like domain maps to 92-229 (YVDETISLSA…RVDVKIRSIV (138 aa)). Cys-191 and Cys-214 are joined by a disulfide.

The protein belongs to the outer membrane OOP (TC 1.B.6) superfamily. In terms of assembly, the C-terminus exists in a monomer-dimer equilibrium.

Its subcellular location is the cell outer membrane. This Neisseria meningitidis serogroup B (strain ATCC BAA-335 / MC58) protein is Outer membrane protein class 4.